A 406-amino-acid chain; its full sequence is Betaine--homocysteine S-methyltransferase 1 (406 aa).

Residues 11–314 (KGILERLNAG…YHIRAIAEEL (304 aa)) form the Hcy-binding domain. N6-succinyllysine is present on residues Lys-40, Lys-93, and Lys-98. Cys-217 contacts Zn(2+). N6-succinyllysine is present on residues Lys-232 and Lys-241. Zn(2+)-binding residues include Cys-299 and Cys-300. Ser-330 carries the post-translational modification Phosphoserine. 2 positions are modified to N6-succinyllysine: Lys-340 and Lys-377.

In terms of assembly, homotetramer. Requires Zn(2+) as cofactor.

The protein localises to the cytoplasm. Its subcellular location is the cytosol. It localises to the nucleus. The catalysed reaction is L-homocysteine + glycine betaine = N,N-dimethylglycine + L-methionine. Its pathway is amine and polyamine degradation; betaine degradation; sarcosine from betaine: step 1/2. It participates in amino-acid biosynthesis; L-methionine biosynthesis via de novo pathway; L-methionine from L-homocysteine (BhmT route): step 1/1. Functionally, involved in the regulation of homocysteine metabolism. Converts betaine and homocysteine to dimethylglycine and methionine, respectively. This reaction is also required for the irreversible oxidation of choline. The protein is Betaine--homocysteine S-methyltransferase 1 (BHMT) of Pongo abelii (Sumatran orangutan).